A 155-amino-acid polypeptide reads, in one-letter code: SsrA-binding protein (155 aa).

This sequence belongs to the SmpB family.

The protein localises to the cytoplasm. Functionally, required for rescue of stalled ribosomes mediated by trans-translation. Binds to transfer-messenger RNA (tmRNA), required for stable association of tmRNA with ribosomes. tmRNA and SmpB together mimic tRNA shape, replacing the anticodon stem-loop with SmpB. tmRNA is encoded by the ssrA gene; the 2 termini fold to resemble tRNA(Ala) and it encodes a 'tag peptide', a short internal open reading frame. During trans-translation Ala-aminoacylated tmRNA acts like a tRNA, entering the A-site of stalled ribosomes, displacing the stalled mRNA. The ribosome then switches to translate the ORF on the tmRNA; the nascent peptide is terminated with the 'tag peptide' encoded by the tmRNA and targeted for degradation. The ribosome is freed to recommence translation, which seems to be the essential function of trans-translation. The sequence is that of SsrA-binding protein from Lactococcus lactis subsp. cremoris (strain MG1363).